We begin with the raw amino-acid sequence, 101 residues long: Large ribosomal subunit protein uL24 (101 aa).

The protein belongs to the universal ribosomal protein uL24 family. As to quaternary structure, part of the 50S ribosomal subunit.

In terms of biological role, one of two assembly initiator proteins, it binds directly to the 5'-end of the 23S rRNA, where it nucleates assembly of the 50S subunit. One of the proteins that surrounds the polypeptide exit tunnel on the outside of the subunit. This is Large ribosomal subunit protein uL24 from Clostridioides difficile (strain 630) (Peptoclostridium difficile).